Reading from the N-terminus, the 89-residue chain is Small ribosomal subunit protein uS15 (89 aa).

Belongs to the universal ribosomal protein uS15 family. In terms of assembly, part of the 30S ribosomal subunit. Forms a bridge to the 50S subunit in the 70S ribosome, contacting the 23S rRNA.

Its function is as follows. One of the primary rRNA binding proteins, it binds directly to 16S rRNA where it helps nucleate assembly of the platform of the 30S subunit by binding and bridging several RNA helices of the 16S rRNA. Forms an intersubunit bridge (bridge B4) with the 23S rRNA of the 50S subunit in the ribosome. This is Small ribosomal subunit protein uS15 from Escherichia coli O139:H28 (strain E24377A / ETEC).